The primary structure comprises 527 residues: Bacillolysin (527 aa).

Residues 1–28 form the signal peptide; the sequence is MKKSYLATSLTLSIAVGVSGFTSVPAFA. Residues 29–223 constitute a propeptide, activation peptide; sequence KTKIDYHKQW…VINKYNMLDH (195 aa). Residues aspartate 276, aspartate 278, and aspartate 354 each contribute to the Ca(2+) site. Histidine 358 contributes to the Zn(2+) binding site. Residue glutamate 359 is part of the active site. The Zn(2+) site is built by histidine 362 and glutamate 382. Residues aspartate 393, asparagine 394, aspartate 396, glutamate 401, tyrosine 404, threonine 405, and aspartate 411 each coordinate Ca(2+). The Proton donor role is filled by histidine 442.

The protein belongs to the peptidase M4 family. It depends on Ca(2+) as a cofactor. Requires Zn(2+) as cofactor.

Its subcellular location is the secreted. It carries out the reaction Similar, but not identical, to that of thermolysin.. Extracellular zinc metalloprotease. The chain is Bacillolysin (npr) from Brevibacillus brevis (Bacillus brevis).